We begin with the raw amino-acid sequence, 62 residues long: Large ribosomal subunit protein bL28 (62 aa).

The segment at 1–28 is disordered; the sequence is MARVCAITGRKARSGNSRSHAMNATKRK.

Belongs to the bacterial ribosomal protein bL28 family.

The sequence is that of Large ribosomal subunit protein bL28 from Bacillus cytotoxicus (strain DSM 22905 / CIP 110041 / 391-98 / NVH 391-98).